We begin with the raw amino-acid sequence, 257 residues long: NAD-capped RNA hydrolase NudC (257 aa).

The substrate site is built by lysine 25 and arginine 69. The Zn(2+) site is built by cysteine 98 and cysteine 101. Glutamate 111 is a binding site for substrate. Residues cysteine 116 and cysteine 119 each coordinate Zn(2+). Residue tyrosine 124 participates in substrate binding. The Nudix hydrolase domain maps to 125-248; the sequence is PQIAPCIIVA…TVARRLIEDT (124 aa). A divalent metal cation contacts are provided by alanine 158, glutamate 174, and glutamate 178. Positions 159–180 match the Nudix box motif; it reads GFVEVGETLEQAVAREVMEESG. A substrate-binding site is contributed by 192–199; that stretch reads QPWPFPQS. A divalent metal cation is bound at residue glutamate 219. Residue alanine 241 participates in substrate binding.

Belongs to the Nudix hydrolase family. NudC subfamily. As to quaternary structure, homodimer. The cofactor is Mg(2+). It depends on Mn(2+) as a cofactor. Requires Zn(2+) as cofactor.

It carries out the reaction a 5'-end NAD(+)-phospho-ribonucleoside in mRNA + H2O = a 5'-end phospho-adenosine-phospho-ribonucleoside in mRNA + beta-nicotinamide D-ribonucleotide + 2 H(+). The catalysed reaction is NAD(+) + H2O = beta-nicotinamide D-ribonucleotide + AMP + 2 H(+). The enzyme catalyses NADH + H2O = reduced beta-nicotinamide D-ribonucleotide + AMP + 2 H(+). In terms of biological role, mRNA decapping enzyme that specifically removes the nicotinamide adenine dinucleotide (NAD) cap from a subset of mRNAs by hydrolyzing the diphosphate linkage to produce nicotinamide mononucleotide (NMN) and 5' monophosphate mRNA. The NAD-cap is present at the 5'-end of some mRNAs and stabilizes RNA against 5'-processing. Has preference for mRNAs with a 5'-end purine. Catalyzes the hydrolysis of a broad range of dinucleotide pyrophosphates. In Shigella dysenteriae serotype 1 (strain Sd197), this protein is NAD-capped RNA hydrolase NudC.